Here is a 417-residue protein sequence, read N- to C-terminus: Glutamyl-tRNA reductase (417 aa).

Substrate is bound by residues 49–52 (TCNR), S105, 110–112 (EPQ), and Q116. The active-site Nucleophile is C50. Residue 185–190 (GAGEMI) coordinates NADP(+).

The protein belongs to the glutamyl-tRNA reductase family. As to quaternary structure, homodimer.

The enzyme catalyses (S)-4-amino-5-oxopentanoate + tRNA(Glu) + NADP(+) = L-glutamyl-tRNA(Glu) + NADPH + H(+). Its pathway is porphyrin-containing compound metabolism; protoporphyrin-IX biosynthesis; 5-aminolevulinate from L-glutamyl-tRNA(Glu): step 1/2. In terms of biological role, catalyzes the NADPH-dependent reduction of glutamyl-tRNA(Glu) to glutamate 1-semialdehyde (GSA). This chain is Glutamyl-tRNA reductase, found in Azoarcus sp. (strain BH72).